Consider the following 576-residue polypeptide: Low-affinity glucose transporter HXT4 (576 aa).

Residues Met1 to Asn56 form a disordered region. Residues Met1 to Ser66 are Cytoplasmic-facing. The segment covering Glu25–Asn37 has biased composition (polar residues). Residues Lys38–Ser54 are compositionally biased toward basic and acidic residues. Residue Lys45 forms a Glycyl lysine isopeptide (Lys-Gly) (interchain with G-Cter in ubiquitin) linkage. A helical membrane pass occupies residues Ala67–Trp87. Over Asp88–Gly122 the chain is Extracellular. The helical transmembrane segment at Leu123–Gly143 threads the bilayer. Residues Asp144 to Lys149 lie on the Cytoplasmic side of the membrane. The helical transmembrane segment at Met150 to Ile170 threads the bilayer. Over Asn171–Arg180 the chain is Extracellular. Residues Ile181–Val201 traverse the membrane as a helical segment. The Cytoplasmic segment spans residues Ser202 to Arg207. The helical transmembrane segment at Gly208–Thr228 threads the bilayer. Residues Asn229 to Arg242 lie on the Extracellular side of the membrane. The chain crosses the membrane as a helical span at residues Val243 to Pro263. Residues Glu264 to Asp346 are Cytoplasmic-facing. Residues Asn347 to Ser363 form a helical membrane-spanning segment. Residues Asp364–Ser369 are Extracellular-facing. Residues Ile370–Val387 form a helical membrane-spanning segment. The Cytoplasmic portion of the chain corresponds to Glu388–Arg394. The helical transmembrane segment at Cys395–Val415 threads the bilayer. Over Thr416 to Val437 the chain is Extracellular. N-linked (GlcNAc...) asparagine glycosylation is present at Asn425. A helical membrane pass occupies residues Phe438 to Asn458. Topologically, residues Ser459–Gln475 are cytoplasmic. A helical membrane pass occupies residues Ala476 to Ile496. Asp497 is a topological domain (extracellular). The chain crosses the membrane as a helical span at residues Phe498–Phe518. At Val519–Lys576 the chain is on the cytoplasmic side.

This sequence belongs to the major facilitator superfamily. Sugar transporter (TC 2.A.1.1) family.

It localises to the cell membrane. Xylose uptake is strongly inhibited by glucose. In terms of biological role, low-affinity glucose transporter. Can also transport xylose. The protein is Low-affinity glucose transporter HXT4 (HXT4) of Saccharomyces cerevisiae (strain JAY291) (Baker's yeast).